Consider the following 504-residue polypeptide: ATP synthase subunit alpha (504 aa).

ATP is bound at residue 169–176 (GDRQIGKT).

The protein belongs to the ATPase alpha/beta chains family. As to quaternary structure, F-type ATPases have 2 components, CF(1) - the catalytic core - and CF(0) - the membrane proton channel. CF(1) has five subunits: alpha(3), beta(3), gamma(1), delta(1), epsilon(1). CF(0) has three main subunits: a(1), b(2) and c(9-12). The alpha and beta chains form an alternating ring which encloses part of the gamma chain. CF(1) is attached to CF(0) by a central stalk formed by the gamma and epsilon chains, while a peripheral stalk is formed by the delta and b chains.

The protein localises to the cell membrane. It carries out the reaction ATP + H2O + 4 H(+)(in) = ADP + phosphate + 5 H(+)(out). Produces ATP from ADP in the presence of a proton gradient across the membrane. The alpha chain is a regulatory subunit. This Syntrophomonas wolfei subsp. wolfei (strain DSM 2245B / Goettingen) protein is ATP synthase subunit alpha.